A 362-amino-acid chain; its full sequence is MTNYYAEITGWGKCLPPAVLSNDDLSTFLDTSDEWIRTRTGIENRRISHVNTSDLATVAAKQALARAGITAQDIDLIIVATCSPDSLIPNIASMVQKNLEIEAAAAFDLNAACTGFVYGLETGTRLIQSGAYRHALIIGAERLSFYIDWAMRDTAVLFGDGAGAVVLSRTEEAVGLQNAKIGCDAQGRDILSVPKFGTSMDRFAADNGYWDFNFVGKEIFKRAVKGMGSAAAHVLAHAGMSKDDINVVIPHQANIRIIQTLCDLSGIDQSKAFVNIQKYGNTSAATVPIALCEAVEQGHIKAGDNILLAAFGAGLTWGAGLVKWGQRVEAISESDAALPECDKSALELLKNAIELCNARRDK.

Residues Cys113 and His251 contribute to the active site. The interval 252–256 is ACP-binding; that stretch reads QANIR. Asn281 is a catalytic residue.

The protein belongs to the thiolase-like superfamily. FabH family. In terms of assembly, homodimer.

It is found in the cytoplasm. The enzyme catalyses malonyl-[ACP] + acetyl-CoA + H(+) = 3-oxobutanoyl-[ACP] + CO2 + CoA. It participates in lipid metabolism; fatty acid biosynthesis. In terms of biological role, catalyzes the condensation reaction of fatty acid synthesis by the addition to an acyl acceptor of two carbons from malonyl-ACP. Catalyzes the first condensation reaction which initiates fatty acid synthesis and may therefore play a role in governing the total rate of fatty acid production. Possesses both acetoacetyl-ACP synthase and acetyl transacylase activities. Its substrate specificity determines the biosynthesis of branched-chain and/or straight-chain of fatty acids. This is Beta-ketoacyl-[acyl-carrier-protein] synthase III 2 from Vibrio vulnificus (strain YJ016).